Consider the following 343-residue polypeptide: MVKVKVAINGYGTIGKRVADAIRLQPDMELIGVAKTSPNYEAFTAMRKGYKLYTTKENIQKFQNSGINVAGSIEDMIKDSDIIIDATPGGVGANYKKIYQEYGKKAIFQGGEKSDVADVSFSALCNYNDAINKNYIRVVSCNTTGILRVLCTINNFDKIEKVRGTIVRRAADPKEVKKGPINSIVADPARIPSHHAKDVLTVLKGIDIITSALVAPTTLMHLHTLFITTRNKVSKEDLLNILSNTPRILLLNTEKADAESTAEIMEIARDLGRYRNDVPETVIFEDSIYTNGNEIFLMYGVHQESIVVPENIDAIRASLNIMSRDESIRLTNETLKIGKGYLI.

Residues 13-14 and G111 each bind NAD(+); that span reads TI. Position 140–142 (140–142) interacts with D-glyceraldehyde 3-phosphate; it reads SCN. Catalysis depends on C141, which acts as the Nucleophile. R169 is an NAD(+) binding site. Position 195 to 196 (195 to 196) interacts with D-glyceraldehyde 3-phosphate; that stretch reads HA. Residue Q303 participates in NAD(+) binding.

Belongs to the glyceraldehyde-3-phosphate dehydrogenase family. Homotetramer.

The protein localises to the cytoplasm. The catalysed reaction is D-glyceraldehyde 3-phosphate + phosphate + NADP(+) = (2R)-3-phospho-glyceroyl phosphate + NADPH + H(+). The enzyme catalyses D-glyceraldehyde 3-phosphate + phosphate + NAD(+) = (2R)-3-phospho-glyceroyl phosphate + NADH + H(+). It functions in the pathway carbohydrate degradation; glycolysis; pyruvate from D-glyceraldehyde 3-phosphate: step 1/5. The protein is Glyceraldehyde-3-phosphate dehydrogenase of Sulfolobus acidocaldarius (strain ATCC 33909 / DSM 639 / JCM 8929 / NBRC 15157 / NCIMB 11770).